Consider the following 516-residue polypeptide: Maturase K (516 aa).

This sequence belongs to the intron maturase 2 family. MatK subfamily.

It is found in the plastid. The protein localises to the chloroplast. Its function is as follows. Usually encoded in the trnK tRNA gene intron. Probably assists in splicing its own and other chloroplast group II introns. This Chara globularis (Fragile stonewort) protein is Maturase K.